Reading from the N-terminus, the 170-residue chain is uncharacterized protein (170 aa).

This is an uncharacterized protein from Saccharomyces cerevisiae (strain ATCC 204508 / S288c) (Baker's yeast).